The chain runs to 100 residues: Large ribosomal subunit protein eL30 (100 aa).

This sequence belongs to the eukaryotic ribosomal protein eL30 family.

This is Large ribosomal subunit protein eL30 from Thermococcus sibiricus (strain DSM 12597 / MM 739).